Reading from the N-terminus, the 425-residue chain is UDP-N-acetylglucosamine 1-carboxyvinyltransferase (425 aa).

25–26 (KN) lines the phosphoenolpyruvate pocket. Arg-95 lines the UDP-N-acetyl-alpha-D-glucosamine pocket. Cys-119 acts as the Proton donor in catalysis. A 2-(S-cysteinyl)pyruvic acid O-phosphothioketal modification is found at Cys-119. UDP-N-acetyl-alpha-D-glucosamine contacts are provided by residues 124–128 (RPVDQ), Asp-306, and Ile-328.

This sequence belongs to the EPSP synthase family. MurA subfamily.

It localises to the cytoplasm. It carries out the reaction phosphoenolpyruvate + UDP-N-acetyl-alpha-D-glucosamine = UDP-N-acetyl-3-O-(1-carboxyvinyl)-alpha-D-glucosamine + phosphate. Its pathway is cell wall biogenesis; peptidoglycan biosynthesis. In terms of biological role, cell wall formation. Adds enolpyruvyl to UDP-N-acetylglucosamine. This Thermus thermophilus (strain ATCC BAA-163 / DSM 7039 / HB27) protein is UDP-N-acetylglucosamine 1-carboxyvinyltransferase.